The following is a 226-amino-acid chain: Endonuclease NucS (226 aa).

The protein belongs to the NucS endonuclease family.

The protein resides in the cytoplasm. In terms of biological role, cleaves both 3' and 5' ssDNA extremities of branched DNA structures. The sequence is that of Endonuclease NucS from Mycobacterium tuberculosis (strain ATCC 25618 / H37Rv).